The primary structure comprises 393 residues: Cysteine protease ATG4B (393 aa).

Position 1 is an N-acetylmethionine (Met1). Residue Ser34 is modified to Phosphoserine. Catalysis depends on Cys74, which acts as the Nucleophile. Cys189 carries the post-translational modification S-nitrosocysteine. Catalysis depends on residues Asp278 and His280. S-nitrosocysteine occurs at positions 292 and 301. A disulfide bond links Cys292 and Cys361. Ser316 and Ser383 each carry phosphoserine. The LIR motif lies at 388 to 391; it reads FEIL. Residue Ser392 is modified to Phosphoserine.

This sequence belongs to the peptidase C54 family. As to quaternary structure, interacts with PFKP; promoting phosphorylation of ATG4B at Ser-34. Interacts with GBP7. In terms of processing, phosphorylation at Ser-383 and Ser-392 promotes autophagy by increasing protein delipidation activity without affecting proteolytic activation of ATG8 proteins. Phosphorylation at Ser-316 by ULK1 inhibits autophagy by decreasing both proteolytic activation and delipidation activities. Phosphorylation at Ser-316 is dephosphorylated by protein phosphatase 2A (PP2A). Phosphorylation at Ser-34 by AKT2 promotes its hydrolase activity, leading to increased proteolytic activation and delipidation of ATG8 family proteins. Phosphorylation at Ser-34 by AKT1 promotes mitochondrial localization and inhibition of the F1F0-ATP synthase activity, leading to elevation of mitochondrial reactive oxygen species (ROS). Post-translationally, ubiquitinated by RNF5, leading to its degradation by the proteasome. S-nitrosylation in response to high glucose decreases both proteolytic activation and delipidation activities. In terms of processing, O-glycosylated by OGT, leading to increase protease activity, thereby promoting the proteolytic activation of ATG8 family proteins. Post-translationally, forms reversible intrachain disulfide bonds in response to oxidative stress. Forms interchain disulfide bonds, leading to formation of homooligomers in response to oxidation.

It is found in the cytoplasm. Its subcellular location is the cytosol. It localises to the cytoplasmic vesicle. The protein resides in the autophagosome. The protein localises to the endoplasmic reticulum. It is found in the mitochondrion. The catalysed reaction is [protein]-C-terminal L-amino acid-glycyl-phosphatidylethanolamide + H2O = [protein]-C-terminal L-amino acid-glycine + a 1,2-diacyl-sn-glycero-3-phosphoethanolamine. The enzyme catalyses [protein]-C-terminal L-amino acid-glycyl-phosphatidylserine + H2O = [protein]-C-terminal L-amino acid-glycine + a 1,2-diacyl-sn-glycero-3-phospho-L-serine. Its activity is regulated as follows. Inhibited by N-ethylmaleimide. Redox-regulated during autophagy since reducing conditions activate ATG4A whereas an oxidizing environment such as the presence of H(2)O(2) inhibits its activity. The cysteine protease activity compounds is inhibited by styrylquinoline compounds 4-28 and LV-320. In terms of biological role, cysteine protease that plays a key role in autophagy by mediating both proteolytic activation and delipidation of ATG8 family proteins. Required for canonical autophagy (macroautophagy), non-canonical autophagy as well as for mitophagy. The protease activity is required for proteolytic activation of ATG8 family proteins: cleaves the C-terminal amino acid of ATG8 proteins MAP1LC3A, MAP1LC3B, MAP1LC3C, GABARAPL1, GABARAPL2 and GABARAP, to reveal a C-terminal glycine. Exposure of the glycine at the C-terminus is essential for ATG8 proteins conjugation to phosphatidylethanolamine (PE) and insertion to membranes, which is necessary for autophagy. Protease activity is also required to counteract formation of high-molecular weight conjugates of ATG8 proteins (ATG8ylation): acts as a deubiquitinating-like enzyme that removes ATG8 conjugated to other proteins, such as ATG3. In addition to the protease activity, also mediates delipidation of ATG8 family proteins. Catalyzes delipidation of PE-conjugated forms of ATG8 proteins during macroautophagy. Also involved in non-canonical autophagy, a parallel pathway involving conjugation of ATG8 proteins to single membranes at endolysosomal compartments, by catalyzing delipidation of ATG8 proteins conjugated to phosphatidylserine (PS). Compared to other members of the family (ATG4A, ATG4C or ATG4C), constitutes the major protein for proteolytic activation of ATG8 proteins, while it displays weaker delipidation activity than other ATG4 paralogs. Involved in phagophore growth during mitophagy independently of its protease activity and of ATG8 proteins: acts by regulating ATG9A trafficking to mitochondria and promoting phagophore-endoplasmic reticulum contacts during the lipid transfer phase of mitophagy. The protein is Cysteine protease ATG4B of Rattus norvegicus (Rat).